A 266-amino-acid chain; its full sequence is 3-methyl-2-oxobutanoate hydroxymethyltransferase (266 aa).

The Mg(2+) site is built by Asp45 and Asp84. Residues 45–46 (DS), Asp84, and Lys112 each bind 3-methyl-2-oxobutanoate. Glu114 contributes to the Mg(2+) binding site. Glu181 (proton acceptor) is an active-site residue.

The protein belongs to the PanB family. Homodecamer; pentamer of dimers. Requires Mg(2+) as cofactor.

The protein localises to the cytoplasm. The enzyme catalyses 3-methyl-2-oxobutanoate + (6R)-5,10-methylene-5,6,7,8-tetrahydrofolate + H2O = 2-dehydropantoate + (6S)-5,6,7,8-tetrahydrofolate. It functions in the pathway cofactor biosynthesis; (R)-pantothenate biosynthesis; (R)-pantoate from 3-methyl-2-oxobutanoate: step 1/2. Functionally, catalyzes the reversible reaction in which hydroxymethyl group from 5,10-methylenetetrahydrofolate is transferred onto alpha-ketoisovalerate to form ketopantoate. The protein is 3-methyl-2-oxobutanoate hydroxymethyltransferase of Pseudomonas putida (strain ATCC 700007 / DSM 6899 / JCM 31910 / BCRC 17059 / LMG 24140 / F1).